The sequence spans 219 residues: Octanoyltransferase (219 aa).

A BPL/LPL catalytic domain is found at 32–207 (SSSPDQLWIV…TFSHNLGYQN (176 aa)). Substrate is bound by residues 71-78 (RGGQVTYH), 138-140 (SLG), and 151-153 (GLA). The active-site Acyl-thioester intermediate is C169.

This sequence belongs to the LipB family.

The protein resides in the cytoplasm. The enzyme catalyses octanoyl-[ACP] + L-lysyl-[protein] = N(6)-octanoyl-L-lysyl-[protein] + holo-[ACP] + H(+). It functions in the pathway protein modification; protein lipoylation via endogenous pathway; protein N(6)-(lipoyl)lysine from octanoyl-[acyl-carrier-protein]: step 1/2. In terms of biological role, catalyzes the transfer of endogenously produced octanoic acid from octanoyl-acyl-carrier-protein onto the lipoyl domains of lipoate-dependent enzymes. Lipoyl-ACP can also act as a substrate although octanoyl-ACP is likely to be the physiological substrate. The sequence is that of Octanoyltransferase from Shewanella woodyi (strain ATCC 51908 / MS32).